We begin with the raw amino-acid sequence, 950 residues long: MAASTGYVRLWAAARCWVLRRPLLAVTGGRVPSASGSWLRRGCRVCDTSTPWGGRVPMGGGQWRGLWDAGSRGGSDETSEGGVEDGATASSGEGPVVTALAPMTVPDVFPHLPLIAISRNPVFPRFIKIVEVKNKKLVELLRRKVRLAQPYVGVFLKRDDNNESDVVESLDEIYHTGTFAQIHEMQDLGDKLRMIVTGHRRIHISRQLEVEPEGLEPEAENKQKSRRKLKRGKKEVGDELGAKPQLEMVTEATSDTSKEVLMVEVENVAHEDFQVTEEVKALTAEIVKTIRDIIALNPLYRESVLQMMQAGQRVVDNPIYLSDMGAALTGAESHELQDVLEETNILKRLYKALSLLKKEFELSKLQQRLGREVEEKIKQTHRKYLLQEQLKIIKKELGLEKDDKDAIEEKFRERLKELVVPKHVMDVVDEELSKLALLDNHSSEFNVTRNYLDWLTSIPWGRQSDENLDLARAQSVLEEDHYGMEDVKKRVLEFIAVSQLRGSTQGKILCFHGPPGVGKTSIARSIARALGREYFRFSVGGMTDVAEIKGHRRTYVGAMPGKIIQCLKKTKTENPLVLIDEVDKIGRGYQGDPSSALLELLDPEQNANFLDHYLDVPVDLSKVLFICTANVTDTIPEPLRDRMEMINVSGYVAQEKLAIAERYLVPQARTLCGLDESKAQLSATVLTLLIKQYCRESGVRNLQKQVEKVLRKAAYKIVSGEAQTVHVTPENLQDFVGKPVFTVERMYDVTPPGVVMGLAWTAMGGSTLFVETSLRRPQPSGSKEDKDGSLEVTGQLGDVMKESARIAYTFARAFLMEQDPENDFLVTSHIHLHVPEGATPKDGPSAGCTIVTALLSLALGQPVLQNLAMTGEVSLTGKVLPVGGIKEKTIAAKRAGVTCIILPAENRKDFSDLAPFITEGLEVHFVEHYRDIFRIAFPLREHQEALAVER.

The transit peptide at 1-65 (MAASTGYVRL…VPMGGGQWRG (65 aa)) directs the protein to the mitochondrion. Disordered stretches follow at residues 67 to 94 (WDAG…SGEG) and 212 to 243 (PEGL…LGAK). The 249-residue stretch at 112–360 (LPLIAISRNP…KALSLLKKEF (249 aa)) folds into the Lon N-terminal domain. Basic residues predominate over residues 224-233 (KSRRKLKRGK). 513–520 (GPPGVGKT) contacts ATP. Residues 749–939 (VTPPGVVMGL…RDIFRIAFPL (191 aa)) form the Lon proteolytic domain. Residues serine 845 and lysine 888 contribute to the active site.

The protein belongs to the peptidase S16 family. In terms of assembly, homohexamer. Organized in a ring with a central cavity. The ATP-binding and proteolytic domains (AP-domain) form a hexameric chamber, while the N-terminal domain is arranged as a trimer of dimers. DNA and RNA binding is stimulated by substrate and inhibited by ATP binding. Interacts with TWNK and mitochondrial DNA polymerase subunit POLG.

It localises to the mitochondrion matrix. The enzyme catalyses Hydrolysis of proteins in presence of ATP.. ATP-dependent serine protease that mediates the selective degradation of misfolded, unassembled or oxidatively damaged polypeptides as well as certain short-lived regulatory proteins in the mitochondrial matrix. Endogenous substrates include mitochondrial steroidogenic acute regulatory (StAR) protein, DELE1, helicase Twinkle (TWNK) and the large ribosomal subunit protein MRPL32/bL32m. MRPL32/bL32m is protected from degradation by LONP1 when it is bound to a nucleic acid (RNA), but TWNK is not. May also have a chaperone function in the assembly of inner membrane protein complexes. Participates in the regulation of mitochondrial gene expression and in the maintenance of the integrity of the mitochondrial genome. Binds to mitochondrial promoters and RNA in a single-stranded, site-specific, and strand-specific manner. May regulate mitochondrial DNA replication and/or gene expression using site-specific, single-stranded DNA binding to target the degradation of regulatory proteins binding to adjacent sites in mitochondrial promoters. The sequence is that of Lon protease homolog, mitochondrial (Lonp1) from Rattus norvegicus (Rat).